Reading from the N-terminus, the 263-residue chain is Microtubule-associated protein RP/EB family member 1 (263 aa).

Residues 14–116 enclose the Calponin-homology (CH) domain; it reads NLSRHDMLAW…FVQWFKKFFD (103 aa). The EB1 C-terminal domain occupies 180-250; sequence KKAAGDDESA…LYATDEGFVI (71 aa).

It belongs to the MAPRE family.

Its subcellular location is the cytoplasm. The protein localises to the cytoskeleton. The protein resides in the microtubule organizing center. It is found in the centrosome. It localises to the golgi apparatus. Its subcellular location is the spindle. The protein localises to the spindle pole. Its function is as follows. Plus-end tracking protein (+TIP) that binds to the plus-end of microtubules and regulates the dynamics of the microtubule cytoskeleton. Promotes cytoplasmic microtubule nucleation and elongation. Involved in mitotic spindle positioning by stabilizing microtubules and promoting dynamic connection between astral microtubules and the cortex during mitotic chromosome segregation. The protein is Microtubule-associated protein RP/EB family member 1 (MAPRE1) of Coturnix coturnix (Common quail).